The following is a 129-amino-acid chain: Azurin-1 (129 aa).

The Plastocyanin-like domain occupies 1-129 (AECSVDIAGN…LMKGVLKLVD (129 aa)). Cysteine 3 and cysteine 26 are oxidised to a cystine. Cu cation-binding residues include histidine 46, cysteine 112, histidine 117, and methionine 121.

It is found in the periplasm. Transfers electrons from cytochrome c551 to cytochrome oxidase. This chain is Azurin-1, found in Alcaligenes xylosoxydans xylosoxydans (Achromobacter xylosoxidans).